Here is a 235-residue protein sequence, read N- to C-terminus: Leucyl/phenylalanyl-tRNA--protein transferase (235 aa).

Belongs to the L/F-transferase family.

It is found in the cytoplasm. It catalyses the reaction N-terminal L-lysyl-[protein] + L-leucyl-tRNA(Leu) = N-terminal L-leucyl-L-lysyl-[protein] + tRNA(Leu) + H(+). The enzyme catalyses N-terminal L-arginyl-[protein] + L-leucyl-tRNA(Leu) = N-terminal L-leucyl-L-arginyl-[protein] + tRNA(Leu) + H(+). The catalysed reaction is L-phenylalanyl-tRNA(Phe) + an N-terminal L-alpha-aminoacyl-[protein] = an N-terminal L-phenylalanyl-L-alpha-aminoacyl-[protein] + tRNA(Phe). Functionally, functions in the N-end rule pathway of protein degradation where it conjugates Leu, Phe and, less efficiently, Met from aminoacyl-tRNAs to the N-termini of proteins containing an N-terminal arginine or lysine. This is Leucyl/phenylalanyl-tRNA--protein transferase from Cellvibrio japonicus (strain Ueda107) (Pseudomonas fluorescens subsp. cellulosa).